Reading from the N-terminus, the 335-residue chain is Aliphatic sulfonates import ATP-binding protein SsuB (335 aa).

Residues 29-61 are disordered; sequence DGDAQDAAVYERDGGAHAPPFASGGAPPDGDRA. Residues 74-293 form the ABC transporter domain; sequence VRLTRVSKRY…ARASAAFAAL (220 aa). ATP is bound at residue 106–113; sequence GRSGCGKS. The interval 308-335 is disordered; the sequence is APAAPNAAGPEGASRGRAAPASGLRWAV.

The protein belongs to the ABC transporter superfamily. Aliphatic sulfonates importer (TC 3.A.1.17.2) family. The complex is composed of two ATP-binding proteins (SsuB), two transmembrane proteins (SsuC) and a solute-binding protein (SsuA).

It localises to the cell inner membrane. It carries out the reaction ATP + H2O + aliphatic sulfonate-[sulfonate-binding protein]Side 1 = ADP + phosphate + aliphatic sulfonateSide 2 + [sulfonate-binding protein]Side 1.. Part of the ABC transporter complex SsuABC involved in aliphatic sulfonates import. Responsible for energy coupling to the transport system. The chain is Aliphatic sulfonates import ATP-binding protein SsuB from Burkholderia pseudomallei (strain 1710b).